Consider the following 247-residue polypeptide: Fasciclin-like arabinogalactan protein 6 (247 aa).

An N-terminal signal peptide occupies residues 1–23 (MSSSLFSYVVLLIFLFTIPYIQS). Positions 36–182 (PINLTAILEA…LAVYVVDSVL (147 aa)) constitute an FAS1 domain. Asn-38, Asn-57, Asn-70, Asn-142, and Asn-153 each carry an N-linked (GlcNAc...) asparagine glycan. Positions 192–212 (TTPTGAPAPKSSTSSSDADSP) are enriched in low complexity. Residues 192–221 (TTPTGAPAPKSSTSSSDADSPAADDEHKSA) form a disordered region. Gly-222 is lipidated: GPI-anchor amidated glycine. The propeptide at 223–247 (SSVKRTSLGIVVSFALFCCSVIYIA) is removed in mature form.

The protein belongs to the fasciclin-like AGP family.

It localises to the cell membrane. Its function is as follows. May be a cell surface adhesion protein. The chain is Fasciclin-like arabinogalactan protein 6 (FLA6) from Arabidopsis thaliana (Mouse-ear cress).